Consider the following 155-residue polypeptide: Small ribosomal subunit protein uS7 (155 aa).

It belongs to the universal ribosomal protein uS7 family. Part of the 30S ribosomal subunit. Contacts proteins S9 and S11.

Its function is as follows. One of the primary rRNA binding proteins, it binds directly to 16S rRNA where it nucleates assembly of the head domain of the 30S subunit. Is located at the subunit interface close to the decoding center, probably blocks exit of the E-site tRNA. In Corynebacterium aurimucosum (strain ATCC 700975 / DSM 44827 / CIP 107346 / CN-1) (Corynebacterium nigricans), this protein is Small ribosomal subunit protein uS7.